The primary structure comprises 215 residues: Ribose-5-phosphate isomerase A (215 aa).

Residues 26 to 29, 79 to 82, and 92 to 95 each bind substrate; these read TGST, DGAD, and KGGG. The Proton acceptor role is filled by E101. K119 serves as a coordination point for substrate.

This sequence belongs to the ribose 5-phosphate isomerase family. In terms of assembly, homodimer.

The enzyme catalyses aldehydo-D-ribose 5-phosphate = D-ribulose 5-phosphate. It functions in the pathway carbohydrate degradation; pentose phosphate pathway; D-ribose 5-phosphate from D-ribulose 5-phosphate (non-oxidative stage): step 1/1. In terms of biological role, catalyzes the reversible conversion of ribose-5-phosphate to ribulose 5-phosphate. This Xanthomonas oryzae pv. oryzae (strain PXO99A) protein is Ribose-5-phosphate isomerase A.